A 413-amino-acid polypeptide reads, in one-letter code: Phosphopentomutase (413 aa).

Mn(2+) contacts are provided by Asp-11, Asp-306, His-311, Asp-347, His-348, and His-359.

The protein belongs to the phosphopentomutase family. Requires Mn(2+) as cofactor.

The protein resides in the cytoplasm. It carries out the reaction 2-deoxy-alpha-D-ribose 1-phosphate = 2-deoxy-D-ribose 5-phosphate. The enzyme catalyses alpha-D-ribose 1-phosphate = D-ribose 5-phosphate. The protein operates within carbohydrate degradation; 2-deoxy-D-ribose 1-phosphate degradation; D-glyceraldehyde 3-phosphate and acetaldehyde from 2-deoxy-alpha-D-ribose 1-phosphate: step 1/2. In terms of biological role, isomerase that catalyzes the conversion of deoxy-ribose 1-phosphate (dRib-1-P) and ribose 1-phosphate (Rib-1-P) to deoxy-ribose 5-phosphate (dRib-5-P) and ribose 5-phosphate (Rib-5-P), respectively. This is Phosphopentomutase from Helicobacter pylori (strain G27).